The following is a 32-amino-acid chain: Photosystem II reaction center protein Z (32 aa).

The helical transmembrane segment at 9 to 29 (IIFSGSLIWVFLLIIVGFLNY) threads the bilayer.

It belongs to the PsbZ family. In terms of assembly, PSII is composed of 1 copy each of membrane proteins PsbA, PsbB, PsbC, PsbD, PsbE, PsbF, PsbH, PsbI, PsbJ, PsbK, PsbL, PsbM, PsbT, PsbY, PsbZ, Psb30/Ycf12, at least 3 peripheral proteins of the oxygen-evolving complex and a large number of cofactors. It forms dimeric complexes.

Its subcellular location is the plastid. The protein resides in the chloroplast thylakoid membrane. Its function is as follows. May control the interaction of photosystem II (PSII) cores with the light-harvesting antenna, regulates electron flow through the 2 photosystem reaction centers. PSII is a light-driven water plastoquinone oxidoreductase, using light energy to abstract electrons from H(2)O, generating a proton gradient subsequently used for ATP formation. The polypeptide is Photosystem II reaction center protein Z (Euglena myxocylindracea).